Consider the following 341-residue polypeptide: N-acetyl-gamma-glutamyl-phosphate reductase (341 aa).

Residue Cys-145 is part of the active site.

This sequence belongs to the NAGSA dehydrogenase family. Type 1 subfamily.

It localises to the cytoplasm. It carries out the reaction N-acetyl-L-glutamate 5-semialdehyde + phosphate + NADP(+) = N-acetyl-L-glutamyl 5-phosphate + NADPH + H(+). It participates in amino-acid biosynthesis; L-arginine biosynthesis; N(2)-acetyl-L-ornithine from L-glutamate: step 3/4. Its function is as follows. Catalyzes the NADPH-dependent reduction of N-acetyl-5-glutamyl phosphate to yield N-acetyl-L-glutamate 5-semialdehyde. The protein is N-acetyl-gamma-glutamyl-phosphate reductase of Methanothrix thermoacetophila (strain DSM 6194 / JCM 14653 / NBRC 101360 / PT) (Methanosaeta thermophila).